The chain runs to 135 residues: Small ribosomal subunit protein uS11 (135 aa).

The protein belongs to the universal ribosomal protein uS11 family. In terms of assembly, part of the 30S ribosomal subunit. Interacts with proteins S7 and S18. Binds to IF-3.

In terms of biological role, located on the platform of the 30S subunit, it bridges several disparate RNA helices of the 16S rRNA. Forms part of the Shine-Dalgarno cleft in the 70S ribosome. In Cutibacterium acnes (strain DSM 16379 / KPA171202) (Propionibacterium acnes), this protein is Small ribosomal subunit protein uS11.